The chain runs to 927 residues: Non-lysosomal glucosylceramidase (927 aa).

Positions 32 to 62 (EETGGTKDVQVTDCKSPEDSRPPKETDCCNP) are disordered. Basic and acidic residues predominate over residues 46 to 58 (KSPEDSRPPKETD).

Belongs to the non-lysosomal glucosylceramidase family. In terms of tissue distribution, widely expressed. Mainly expressed in brain, heart, skeletal muscle, kidney and placenta and expressed at lower levels in liver, spleen, small intestine and lung. Detectable in colon, thymus and peripheral blood leukocytes.

The protein localises to the endoplasmic reticulum membrane. Its subcellular location is the golgi apparatus membrane. It carries out the reaction a beta-D-glucosyl-(1&lt;-&gt;1')-N-acylsphing-4-enine + H2O = an N-acylsphing-4-enine + D-glucose. The catalysed reaction is a beta-D-galactosyl-(1&lt;-&gt;1')-N-acylsphing-4-enine + H2O = an N-acylsphing-4-enine + D-galactose. It catalyses the reaction beta-D-glucosyl-(1-&gt;3)-O-lithocholate + H2O = lithocholate + D-glucose. The enzyme catalyses beta-D-glucosyl-(1-&gt;3)-O-chenodeoxycholate + H2O = chenodeoxycholate + D-glucose. It carries out the reaction a di-trans,poly-cis-dolichyl beta-D-glucosyl phosphate + chenodeoxycholate = beta-D-glucosyl-(1-&gt;3)-O-chenodeoxycholate + a di-trans,poly-cis-dolichyl phosphate + H(+). The catalysed reaction is octyl beta-D-glucose + chenodeoxycholate = beta-D-glucosyl-(1-&gt;3)-O-chenodeoxycholate + octan-1-ol. It catalyses the reaction cholesteryl 3-beta-D-glucoside + H2O = cholesterol + D-glucose. The enzyme catalyses a beta-D-glucosyl-(1&lt;-&gt;1')-N-acylsphing-4-enine + cholesterol = cholesteryl 3-beta-D-glucoside + an N-acylsphing-4-enine. It carries out the reaction beta-D-glucosyl-N-(9Z-octadecenoyl)-sphing-4E-enine + cholesterol = N-(9Z-octadecenoyl)-sphing-4-enine + cholesteryl 3-beta-D-glucoside. The catalysed reaction is a beta-D-galactosyl-(1&lt;-&gt;1')-N-acylsphing-4-enine + cholesterol = cholesteryl 3-beta-D-galactoside + an N-acylsphing-4-enine. It catalyses the reaction 1-(beta-D-galactosyl)-N-dodecanoylsphing-4-enine + cholesterol = cholesteryl 3-beta-D-galactoside + N-dodecanoylsphing-4-enine. It participates in lipid metabolism; sphingolipid metabolism. Its pathway is steroid metabolism; cholesterol metabolism. Its activity is regulated as follows. Inhibited by AMP-DMN/N -((5-adamantane-1-yl-methoxy)pentyl)-deoxynojirimycin. Activated by Mn(2+), Co(2+) and Mg(2+) and inhibited by Zn(2+). Enzymatic activity is dependent on membrane association and requires the presence of lipids. The membrane-associated enzyme is not inhibited by condutiriol B epoxide and bromocondutiriol B epoxide. Its function is as follows. Non-lysosomal glucosylceramidase that catalyzes the hydrolysis of glucosylceramides/GlcCers (such as beta-D-glucosyl-(1&lt;-&gt;1')-N-acylsphing-4-enine) to free glucose and ceramides (such as N-acylsphing-4-enine). GlcCers are membrane glycosphingolipids that have a wide intracellular distribution. They are the main precursors of more complex glycosphingolipids that play a role in cellular growth, differentiation, adhesion, signaling, cytoskeletal dynamics and membrane properties. Involved in the transglucosylation of cholesterol, transfers glucose from GlcCer to cholesterol, thereby modifying its water solubility and biological properties. Under specific conditions, may catalyze the reverse reaction, transferring glucose from cholesteryl-3-beta-D-glucoside to ceramide (such as N-acylsphing-4-enine). May play a role in the metabolism of bile acids. Able to hydrolyze bile acid 3-O-glucosides as well as to produce bile acid-glucose conjugates thanks to a bile acid glucosyl transferase activity. Catalyzes the hydrolysis of galactosylceramides/GalCers (such as beta-D-galactosyl-(1&lt;-&gt;1')-N-acylsphing-4-enine), as well as the galactosyl transfer between GalCers and cholesterol in vitro with lower activity compared with their activity against GlcCers. This is Non-lysosomal glucosylceramidase from Homo sapiens (Human).